Consider the following 327-residue polypeptide: Malate dehydrogenase (327 aa).

Residues 20–25 (GAGRVG) and aspartate 44 contribute to the NAD(+) site. Substrate contacts are provided by arginine 93 and arginine 99. Residues asparagine 106 and 129–131 (VTN) each bind NAD(+). Substrate is bound by residues asparagine 131 and arginine 162. Histidine 186 serves as the catalytic Proton acceptor.

Belongs to the LDH/MDH superfamily. MDH type 3 family.

The enzyme catalyses (S)-malate + NAD(+) = oxaloacetate + NADH + H(+). Catalyzes the reversible oxidation of malate to oxaloacetate. This Nostoc punctiforme (strain ATCC 29133 / PCC 73102) protein is Malate dehydrogenase.